Consider the following 156-residue polypeptide: Ribosomal RNA large subunit methyltransferase H (156 aa).

S-adenosyl-L-methionine contacts are provided by residues Leu73, Gly104, and 123-128; that span reads LSALTL.

This sequence belongs to the RNA methyltransferase RlmH family. In terms of assembly, homodimer.

Its subcellular location is the cytoplasm. The catalysed reaction is pseudouridine(1915) in 23S rRNA + S-adenosyl-L-methionine = N(3)-methylpseudouridine(1915) in 23S rRNA + S-adenosyl-L-homocysteine + H(+). Functionally, specifically methylates the pseudouridine at position 1915 (m3Psi1915) in 23S rRNA. The chain is Ribosomal RNA large subunit methyltransferase H from Shewanella sediminis (strain HAW-EB3).